A 109-amino-acid polypeptide reads, in one-letter code: Nucleoid-associated protein VP2178 (109 aa).

2 disordered regions span residues 1–22 and 88–109; these read MFGK…ERMQ and QKEK…KMPF.

It belongs to the YbaB/EbfC family. As to quaternary structure, homodimer.

The protein localises to the cytoplasm. It localises to the nucleoid. Binds to DNA and alters its conformation. May be involved in regulation of gene expression, nucleoid organization and DNA protection. The protein is Nucleoid-associated protein VP2178 of Vibrio parahaemolyticus serotype O3:K6 (strain RIMD 2210633).